We begin with the raw amino-acid sequence, 144 residues long: Cell division protein SepF (144 aa).

The protein belongs to the SepF family. As to quaternary structure, homodimer. Interacts with FtsZ.

It is found in the cytoplasm. In terms of biological role, cell division protein that is part of the divisome complex and is recruited early to the Z-ring. Probably stimulates Z-ring formation, perhaps through the cross-linking of FtsZ protofilaments. Its function overlaps with FtsA. This chain is Cell division protein SepF, found in Geobacillus sp. (strain WCH70).